A 338-amino-acid chain; its full sequence is uncharacterized protein (338 aa).

One can recognise a TNase-like domain in the interval 144-321 (HTLPVDVKAV…RAARVGLWAS (178 aa)). Catalysis depends on residues arginine 228, glutamate 236, and arginine 270.

This is an uncharacterized protein from Capnoides sempervirens (Rock-harlequin).